A 175-amino-acid chain; its full sequence is Large ribosomal subunit protein uL15 (175 aa).

2 disordered regions span residues 1-65 (MSTL…LPKF) and 155-175 (PESAAKAHAGKGVKAPRQPKA). Over residues 12–21 (RSWHRKKRVG) the composition is skewed to basic residues. The span at 22-38 (RGQGSGLGKTAGRGGKG) shows a compositional bias: gly residues. A compositionally biased stretch (low complexity) spans 160–169 (KAHAGKGVKA).

This sequence belongs to the universal ribosomal protein uL15 family. Part of the 50S ribosomal subunit.

Binds to the 23S rRNA. The polypeptide is Large ribosomal subunit protein uL15 (Myxococcus xanthus (strain DK1622)).